A 136-amino-acid polypeptide reads, in one-letter code: Cytochrome b5 (136 aa).

One can recognise a Cytochrome b5 heme-binding domain in the interval 5 to 81; sequence TKVFTLAEVS…LDEYYVGDID (77 aa). Heme-binding residues include His-40 and His-64. A helical membrane pass occupies residues 107–127; that stretch reads FVVKLLQFLVPLIILGVAFGI.

It belongs to the cytochrome b5 family. Is highly expressed in developing seeds, moderately expressed in flowers, and is expressed at low levels in the leaf.

Its subcellular location is the endoplasmic reticulum membrane. The protein resides in the microsome membrane. Cytochrome b5 is a membrane bound hemoprotein which function as an electron carrier for several membrane bound oxygenases. May play a key role in the modification by desaturation of fatty acids in the endoplasmic reticulum, which in the developing seed is utilized for membrane synthesis and in the developmentally regulated production of large amounts of storage lipids. Is involved in the reduction of cytochrome P-450 and may therefore be involved in flavonoid biosynthesis in the petals. The polypeptide is Cytochrome b5 (Nicotiana tabacum (Common tobacco)).